A 164-amino-acid polypeptide reads, in one-letter code: Cyanate hydratase (164 aa).

Active-site residues include R90, E93, and S116.

The protein belongs to the cyanase family.

The enzyme catalyses cyanate + hydrogencarbonate + 3 H(+) = NH4(+) + 2 CO2. Functionally, catalyzes the reaction of cyanate with bicarbonate to produce ammonia and carbon dioxide. In Ricinus communis (Castor bean), this protein is Cyanate hydratase.